Reading from the N-terminus, the 284-residue chain is Bifunctional protein FolD 1 (284 aa).

NADP(+)-binding positions include 166 to 168 (GAS), S191, and I232.

This sequence belongs to the tetrahydrofolate dehydrogenase/cyclohydrolase family. As to quaternary structure, homodimer.

The catalysed reaction is (6R)-5,10-methylene-5,6,7,8-tetrahydrofolate + NADP(+) = (6R)-5,10-methenyltetrahydrofolate + NADPH. It catalyses the reaction (6R)-5,10-methenyltetrahydrofolate + H2O = (6R)-10-formyltetrahydrofolate + H(+). The protein operates within one-carbon metabolism; tetrahydrofolate interconversion. In terms of biological role, catalyzes the oxidation of 5,10-methylenetetrahydrofolate to 5,10-methenyltetrahydrofolate and then the hydrolysis of 5,10-methenyltetrahydrofolate to 10-formyltetrahydrofolate. The sequence is that of Bifunctional protein FolD 1 from Hydrogenovibrio crunogenus (strain DSM 25203 / XCL-2) (Thiomicrospira crunogena).